We begin with the raw amino-acid sequence, 294 residues long: ATP phosphoribosyltransferase (294 aa).

The protein belongs to the ATP phosphoribosyltransferase family. Long subfamily. Requires Mg(2+) as cofactor.

It is found in the cytoplasm. It catalyses the reaction 1-(5-phospho-beta-D-ribosyl)-ATP + diphosphate = 5-phospho-alpha-D-ribose 1-diphosphate + ATP. The protein operates within amino-acid biosynthesis; L-histidine biosynthesis; L-histidine from 5-phospho-alpha-D-ribose 1-diphosphate: step 1/9. Feedback inhibited by histidine. Catalyzes the condensation of ATP and 5-phosphoribose 1-diphosphate to form N'-(5'-phosphoribosyl)-ATP (PR-ATP). Has a crucial role in the pathway because the rate of histidine biosynthesis seems to be controlled primarily by regulation of HisG enzymatic activity. This is ATP phosphoribosyltransferase from Pelodictyon phaeoclathratiforme (strain DSM 5477 / BU-1).